A 105-amino-acid chain; its full sequence is 3-phenylpropionate/cinnamic acid dioxygenase ferredoxin subunit (105 aa).

Residues 4-99 (LFVCTVEELP…VVVKDGNIYI (96 aa)) enclose the Rieske domain. Residues Cys42, His44, Cys62, and His65 each coordinate [2Fe-2S] cluster.

This sequence belongs to the bacterial ring-hydroxylating dioxygenase ferredoxin component family. In terms of assembly, this dioxygenase system consists of four proteins: the two subunits of the hydroxylase component (HcaE and HcaF), a ferredoxin (HcaC) and a ferredoxin reductase (HcaD). Requires [2Fe-2S] cluster as cofactor.

It functions in the pathway aromatic compound metabolism; 3-phenylpropanoate degradation. In terms of biological role, part of the multicomponent 3-phenylpropionate dioxygenase, that converts 3-phenylpropionic acid (PP) and cinnamic acid (CI) into 3-phenylpropionate-dihydrodiol (PP-dihydrodiol) and cinnamic acid-dihydrodiol (CI-dihydrodiol), respectively. This protein seems to be a 2Fe-2S ferredoxin. In Photorhabdus laumondii subsp. laumondii (strain DSM 15139 / CIP 105565 / TT01) (Photorhabdus luminescens subsp. laumondii), this protein is 3-phenylpropionate/cinnamic acid dioxygenase ferredoxin subunit.